We begin with the raw amino-acid sequence, 249 residues long: U1 small nuclear ribonucleoprotein usp102 (249 aa).

The interval 1 to 25 (MDPQTNSHQEVQQPSPKETDSQTPS) is disordered. An RRM 1 domain is found at 26–105 (ETLYIRNIEE…KPMMIQYSKS (80 aa)). Residues 113–157 (RESPEEIETRKKDRKNRREMLKRTSALQPAAPKPTHKKPVPKRNV) are disordered. Positions 114 to 134 (ESPEEIETRKKDRKNRREMLK) are enriched in basic and acidic residues. The region spanning 174-247 (KVLLLQNIPQ…NQIKVTFARK (74 aa)) is the RRM 2 domain.

It belongs to the RRM U1 A/B'' family. In terms of assembly, component of the spliceosome where it is associated with snRNP U1.

It is found in the nucleus. It localises to the nucleolus. In terms of biological role, involved in nuclear mRNA splicing. The polypeptide is U1 small nuclear ribonucleoprotein usp102 (Schizosaccharomyces pombe (strain 972 / ATCC 24843) (Fission yeast)).